The following is a 1026-amino-acid chain: Multidrug resistance protein MdtC (1026 aa).

The next 11 helical transmembrane spans lie at 15–35 (ILIA…LPVA), 333–353 (EVEE…FLFL), 360–380 (LIPA…MYLC), 387–407 (LSLM…IVVL), 431–451 (VGFT…PLLL), 463–483 (FAVT…TLTP), 528–548 (LVGV…IAIP), 853–873 (LILI…LYES), 897–917 (LFNA…IGIV), 953–973 (PIMM…LSGG), and 984–1004 (ITIV…TPVV).

Belongs to the resistance-nodulation-cell division (RND) (TC 2.A.6) family. MdtC subfamily. In terms of assembly, part of a tripartite efflux system composed of MdtA, MdtB and MdtC. MdtC forms a heteromultimer with MdtB.

It is found in the cell inner membrane. The protein is Multidrug resistance protein MdtC of Salmonella agona (strain SL483).